The sequence spans 121 residues: Holo-[acyl-carrier-protein] synthase (121 aa).

The Mg(2+) site is built by aspartate 8 and glutamate 55.

Belongs to the P-Pant transferase superfamily. AcpS family. Mg(2+) is required as a cofactor.

It is found in the cytoplasm. The enzyme catalyses apo-[ACP] + CoA = holo-[ACP] + adenosine 3',5'-bisphosphate + H(+). In terms of biological role, transfers the 4'-phosphopantetheine moiety from coenzyme A to a Ser of acyl-carrier-protein. The protein is Holo-[acyl-carrier-protein] synthase of Caldicellulosiruptor bescii (strain ATCC BAA-1888 / DSM 6725 / KCTC 15123 / Z-1320) (Anaerocellum thermophilum).